Consider the following 141-residue polypeptide: Hemoglobin subunit alpha (141 aa).

The region spanning 1 to 141 (VLSPADKTNV…VSTVLTSKYR (141 aa)) is the Globin domain. A Phosphoserine modification is found at Ser-3. Lys-7 carries the N6-succinyllysine modification. Position 8 is a phosphothreonine (Thr-8). An N6-succinyllysine modification is found at Lys-11. At Lys-16 the chain carries N6-acetyllysine; alternate. An N6-succinyllysine; alternate modification is found at Lys-16. Tyr-24 is subject to Phosphotyrosine. Ser-35 carries the phosphoserine modification. Lys-40 carries the post-translational modification N6-succinyllysine. Ser-49 is subject to Phosphoserine. His-58 contacts O2. A heme b-binding site is contributed by His-87. Ser-102 carries the phosphoserine modification. Thr-108 carries the post-translational modification Phosphothreonine. Phosphoserine occurs at positions 124 and 131. Phosphothreonine is present on residues Thr-134 and Thr-137. Residue Ser-138 is modified to Phosphoserine.

This sequence belongs to the globin family. Heterotetramer of two alpha chains and two beta chains. Red blood cells.

Functionally, involved in oxygen transport from the lung to the various peripheral tissues. Its function is as follows. Hemopressin acts as an antagonist peptide of the cannabinoid receptor CNR1. Hemopressin-binding efficiently blocks cannabinoid receptor CNR1 and subsequent signaling. The protein is Hemoglobin subunit alpha (HBA) of Loris tardigradus (Slender loris).